The sequence spans 81 residues: Photosystem I iron-sulfur center (81 aa).

4Fe-4S ferredoxin-type domains follow at residues 2 to 31 (SHAV…MVPW) and 39 to 68 (IAAS…IRVY). Residues Cys11, Cys14, Cys17, Cys21, Cys48, Cys51, Cys54, and Cys58 each contribute to the [4Fe-4S] cluster site.

In terms of assembly, the cyanobacterial PSI reaction center is composed of one copy each of PsaA,B,C,D,E,F,I,J,K,L,M and X, and forms trimeric complexes. [4Fe-4S] cluster is required as a cofactor.

Its subcellular location is the cellular thylakoid membrane. It carries out the reaction reduced [plastocyanin] + hnu + oxidized [2Fe-2S]-[ferredoxin] = oxidized [plastocyanin] + reduced [2Fe-2S]-[ferredoxin]. Functionally, apoprotein for the two 4Fe-4S centers FA and FB of photosystem I (PSI); essential for photochemical activity. FB is the terminal electron acceptor of PSI, donating electrons to ferredoxin. The C-terminus interacts with PsaA/B/D and helps assemble the protein into the PSI complex. Required for binding of PsaD and PsaE to PSI. PSI is a plastocyanin/cytochrome c6-ferredoxin oxidoreductase, converting photonic excitation into a charge separation, which transfers an electron from the donor P700 chlorophyll pair to the spectroscopically characterized acceptors A0, A1, FX, FA and FB in turn. The sequence is that of Photosystem I iron-sulfur center from Prochlorococcus marinus (strain MIT 9313).